The following is a 304-amino-acid chain: dTDP-4-dehydrorhamnose reductase (304 aa).

NADH contacts are provided by residues 15–17, 41–42, and 63–65; these read GQL, DI, and AYT. Residues 16–17, 41–42, and 63–65 contribute to the NADPH site; these read QL, DI, and AYT. 104 to 105 is a dTDP-beta-L-rhamnose binding site; the sequence is TD. 2 residues coordinate NADH: Tyr-132 and Lys-136. NADPH contacts are provided by Tyr-132 and Lys-136. Tyr-132 acts as the Proton donor/acceptor in catalysis. Position 157 (Trp-157) interacts with dTDP-beta-L-rhamnose.

The protein belongs to the dTDP-4-dehydrorhamnose reductase family. Mg(2+) is required as a cofactor.

The catalysed reaction is dTDP-beta-L-rhamnose + NADP(+) = dTDP-4-dehydro-beta-L-rhamnose + NADPH + H(+). Its pathway is carbohydrate biosynthesis; dTDP-L-rhamnose biosynthesis. In terms of biological role, involved in the biosynthesis of the dTDP-L-rhamnose which is a component of the critical linker, D-N-acetylglucosamine-L-rhamnose disaccharide, which connects the galactan region of arabinogalactan to peptidoglycan via a phosphodiester linkage. Catalyzes the reduction of dTDP-6-deoxy-L-lyxo-4-hexulose to yield dTDP-L-rhamnose. This Mycobacterium tuberculosis (strain CDC 1551 / Oshkosh) protein is dTDP-4-dehydrorhamnose reductase.